Reading from the N-terminus, the 62-residue chain is ATP synthase subunit J, mitochondrial (62 aa).

A helical membrane pass occupies residues 13 to 32 (IVKPLWPYAVGGVITFFLFA).

In terms of assembly, F-type ATP synthases have 2 components, the catalytic core F(1) and the membrane-embedded component F(0), linked together by a central stalk and a peripheral stalk. The central stalk, also called rotor shaft, is often seen as part of F(1). The peripheral stalk is seen as part of F(0). F(0) contains the membrane channel next to the rotor. F-type ATP synthases form dimers but each monomer functions independently in ATP generation. The dimer consists of 17 different polypeptides: ATP1 (subunit alpha, 3 molecules per monomer, part of F(1)), ATP2 (subunit beta, 3 copies per monomer, part of F(1)), ATP3 (subunit gamma, part of the central stalk), ATP4 (subunit b, part of the peripheral stalk), ATP5/OSCP (subunit 5/OSCP, part of the peripheral stalk), ATP6 (subunit a, part of the peripheral stalk), ATP7 (subunit d, part of the peripheral stalk), ATP8 (subunit 8, part of the peripheral stalk), OLI1 (subunit c, part of the rotor, 10 molecules per monomer), ATP14 (subunit h, part of the peripheral stalk), ATP15 (subunit epsilon, part of the central stalk), ATP16 (subunit delta, part of the central stalk), ATP17 (subunit f, part of the peripheral stalk), ATP18 (subunit i/j, part of the peripheral stalk), ATP19 (subunit k, dimer-specific, at interface between monomers), ATP20 (subunit g, at interface between monomers), TIM11 (subunit e, at interface between monomers).

The protein resides in the mitochondrion inner membrane. Functionally, mitochondrial membrane ATP synthase (F(1)F(0) ATP synthase or Complex V) produces ATP from ADP in the presence of a proton gradient across the membrane which is generated by electron transport complexes of the respiratory chain. F-type ATP synthases consist of two structural domains, F(1) - containing the extramembraneous catalytic core, and F(0) - containing the membrane proton channel, linked together by a central stalk and a peripheral stalk. During catalysis, ATP synthesis in the catalytic domain of F(1) is coupled via a rotary mechanism of the central stalk subunits to proton translocation. Part of the complex F(0) domain. Minor subunit located with subunit a/ATP6 in the membrane. The polypeptide is ATP synthase subunit J, mitochondrial (Yarrowia lipolytica (strain CLIB 122 / E 150) (Yeast)).